The primary structure comprises 507 residues: Maturase K (507 aa).

It belongs to the intron maturase 2 family. MatK subfamily.

It is found in the plastid. The protein localises to the chloroplast. Its function is as follows. Usually encoded in the trnK tRNA gene intron. Probably assists in splicing its own and other chloroplast group II introns. The sequence is that of Maturase K from Browningia hertlingiana (Cactus).